The primary structure comprises 99 residues: Integration host factor subunit alpha (99 aa).

The protein belongs to the bacterial histone-like protein family. In terms of assembly, heterodimer of an alpha and a beta chain.

Its function is as follows. This protein is one of the two subunits of integration host factor, a specific DNA-binding protein that functions in genetic recombination as well as in transcriptional and translational control. The protein is Integration host factor subunit alpha of Alteromonas mediterranea (strain DSM 17117 / CIP 110805 / LMG 28347 / Deep ecotype).